Reading from the N-terminus, the 359-residue chain is Cytohesin-interacting protein (359 aa).

In terms of domain architecture, PDZ spans 77-166; it reads LVTVEKQDNE…LLTIETLNGT (90 aa). Positions 166 to 188 are interaction with CYTH1; the sequence is TMILKRTELEAKLQVLKQTLKQK. Positions 166-188 form a coiled coil; that stretch reads TMILKRTELEAKLQVLKQTLKQK.

Interacts with CYTH1 and SNX27. As to expression, expressed in lymph nodes, thymus, spleen, lung, peripheral blood leukocytes and bone marrow.

It is found in the cytoplasm. The protein resides in the early endosome. In terms of biological role, by its binding to cytohesin-1 (CYTH1), it modifies activation of ARFs by CYTH1 and its precise function may be to sequester CYTH1 in the cytoplasm. The polypeptide is Cytohesin-interacting protein (CYTIP) (Homo sapiens (Human)).